Consider the following 85-residue polypeptide: Putative membrane protein insertion efficiency factor (85 aa).

Belongs to the UPF0161 family.

The protein resides in the cell inner membrane. Functionally, could be involved in insertion of integral membrane proteins into the membrane. The sequence is that of Putative membrane protein insertion efficiency factor from Sodalis glossinidius (strain morsitans).